The following is a 311-amino-acid chain: Ribose-5-phosphate isomerase (311 aa).

Over residues 22-32 (AGGAASGGGGN) the composition is skewed to gly residues. The interval 22 to 67 (AGGAASGGGGNSWDLPGSHVRLPGRAQSGTRGGAGNTSTSCGDSNS) is disordered. An Omega-N-methylarginine modification is found at Arg52. The span at 57–67 (NTSTSCGDSNS) shows a compositional bias: polar residues. At Ser106 the chain carries Phosphoserine.

It belongs to the ribose 5-phosphate isomerase family.

The catalysed reaction is aldehydo-D-ribose 5-phosphate = D-ribulose 5-phosphate. The protein operates within carbohydrate degradation; pentose phosphate pathway; D-ribose 5-phosphate from D-ribulose 5-phosphate (non-oxidative stage): step 1/1. Catalyzes the reversible conversion of ribose-5-phosphate to ribulose 5-phosphate and participates in the first step of the non-oxidative branch of the pentose phosphate pathway. This chain is Ribose-5-phosphate isomerase, found in Homo sapiens (Human).